We begin with the raw amino-acid sequence, 388 residues long: Dipeptidase verJ (388 aa).

Zn(2+) is bound by residues histidine 29, aspartate 31, and glutamate 142. Residues histidine 169, arginine 243, and aspartate 300 each coordinate substrate.

It belongs to the metallo-dependent hydrolases superfamily. Peptidase M19 family. Requires Zn(2+) as cofactor.

The enzyme catalyses an L-aminoacyl-L-amino acid + H2O = 2 an L-alpha-amino acid. It functions in the pathway mycotoxin biosynthesis. Dipeptidase; part of the gene cluster that mediates the biosynthesis of 11'-deoxyverticillin A, one of the dimeric epipolythiodioxopiperazines (ETPs) from the verticillin family that act as mycotoxins. 11'-deoxyverticillin A is required for normal conidiation. The nonribosomal peptide synthetase verP is speculated to be responsible for condensation of amino acids to form the carbon skeleton of verticillin, whereas the cluster-specific tailoring enzymes are involved in further modifications leading to the production of 11'-deoxyverticillin A. The chain is Dipeptidase verJ from Clonostachys rogersoniana.